Reading from the N-terminus, the 84-residue chain is Putative membrane protein insertion efficiency factor (84 aa).

The disordered stretch occupies residues 63–84 (LGGSGYDPPPPPKTPRKWKCEE).

Belongs to the UPF0161 family.

The protein resides in the cell inner membrane. In terms of biological role, could be involved in insertion of integral membrane proteins into the membrane. In Caulobacter sp. (strain K31), this protein is Putative membrane protein insertion efficiency factor.